A 222-amino-acid polypeptide reads, in one-letter code: C-8 sterol isomerase ERG2 (222 aa).

The chain crosses the membrane as a helical span at residues phenylalanine 3 to threonine 23.

Belongs to the ERG2 family.

It localises to the endoplasmic reticulum membrane. It catalyses the reaction fecosterol = episterol. It functions in the pathway steroid metabolism; ergosterol biosynthesis; ergosterol from zymosterol: step 2/5. With respect to regulation, catalytic activity is inhibited by the morphilines tridemorph, fenpropimorph, and fenpropidin. In terms of biological role, C-8 sterol isomerase; part of the third module of ergosterol biosynthesis pathway that includes the late steps of the pathway. ERG2 catalyzes the reaction which results in unsaturation at C-7 in the B ring of sterols and thus converts fecosterol to episterol. The third module or late pathway involves the ergosterol synthesis itself through consecutive reactions that mainly occur in the endoplasmic reticulum (ER) membrane. Firstly, the squalene synthase ERG9 catalyzes the condensation of 2 farnesyl pyrophosphate moieties to form squalene, which is the precursor of all steroids. Squalene synthase is crucial for balancing the incorporation of farnesyl diphosphate (FPP) into sterol and nonsterol isoprene synthesis. Secondly, the squalene epoxidase ERG1 catalyzes the stereospecific oxidation of squalene to (S)-2,3-epoxysqualene, which is considered to be a rate-limiting enzyme in steroid biosynthesis. Then, the lanosterol synthase ERG7 catalyzes the cyclization of (S)-2,3 oxidosqualene to lanosterol, a reaction that forms the sterol core. In the next steps, lanosterol is transformed to zymosterol through a complex process involving various demethylation, reduction and desaturation reactions. The lanosterol 14-alpha-demethylase ERG11 (also known as CYP51) catalyzes C14-demethylation of lanosterol to produce 4,4'-dimethyl cholesta-8,14,24-triene-3-beta-ol, which is critical for ergosterol biosynthesis. The C-14 reductase ERG24 reduces the C14=C15 double bond of 4,4-dimethyl-cholesta-8,14,24-trienol to produce 4,4-dimethyl-cholesta-8,24-dienol. 4,4-dimethyl-cholesta-8,24-dienol is substrate of the C-4 demethylation complex ERG25-ERG26-ERG27 in which ERG25 catalyzes the three-step monooxygenation required for the demethylation of 4,4-dimethyl and 4alpha-methylsterols, ERG26 catalyzes the oxidative decarboxylation that results in a reduction of the 3-beta-hydroxy group at the C-3 carbon to an oxo group, and ERG27 is responsible for the reduction of the keto group on the C-3. ERG28 has a role as a scaffold to help anchor ERG25, ERG26 and ERG27 to the endoplasmic reticulum and ERG29 regulates the activity of the iron-containing C4-methylsterol oxidase ERG25. Then, the sterol 24-C-methyltransferase ERG6 catalyzes the methyl transfer from S-adenosyl-methionine to the C-24 of zymosterol to form fecosterol. The C-8 sterol isomerase ERG2 catalyzes the reaction which results in unsaturation at C-7 in the B ring of sterols and thus converts fecosterol to episterol. The sterol-C5-desaturase ERG3 then catalyzes the introduction of a C-5 double bond in the B ring to produce 5-dehydroepisterol. The C-22 sterol desaturase ERG5 further converts 5-dehydroepisterol into ergosta-5,7,22,24(28)-tetraen-3beta-ol by forming the C-22(23) double bond in the sterol side chain. Finally, ergosta-5,7,22,24(28)-tetraen-3beta-ol is substrate of the C-24(28) sterol reductase ERG4 to produce ergosterol. The protein is C-8 sterol isomerase ERG2 of Saccharomyces cerevisiae (strain ATCC 204508 / S288c) (Baker's yeast).